We begin with the raw amino-acid sequence, 153 residues long: Nucleoside diphosphate kinase (153 aa).

ATP contacts are provided by Lys13, Phe61, Arg89, Thr95, Arg106, and Asn116. Thr95 bears the Phosphothreonine mark. The active-site Pros-phosphohistidine intermediate is His119.

It belongs to the NDK family. As to quaternary structure, homohexamer and homotetramer. Interacts with TOM40 preferentially in an unfolded, unphosphorylated form. Requires Mg(2+) as cofactor. Post-translationally, the N-terminus is blocked.

It is found in the cytoplasm. The protein localises to the mitochondrion intermembrane space. The catalysed reaction is a 2'-deoxyribonucleoside 5'-diphosphate + ATP = a 2'-deoxyribonucleoside 5'-triphosphate + ADP. It catalyses the reaction a ribonucleoside 5'-diphosphate + ATP = a ribonucleoside 5'-triphosphate + ADP. In terms of biological role, major role in the synthesis of nucleoside triphosphates other than ATP. The ATP gamma phosphate is transferred to the NDP beta phosphate via a ping-pong mechanism, using a phosphorylated active-site intermediate. Required for repair of UV radiation- and etoposide-induced DNA damage. The chain is Nucleoside diphosphate kinase (YNK1) from Saccharomyces cerevisiae (strain ATCC 204508 / S288c) (Baker's yeast).